Consider the following 396-residue polypeptide: Elongation factor Tu (396 aa).

One can recognise a tr-type G domain in the interval 10 to 207 (KPHCNIGTIG…VDAYIPQPPR (198 aa)). The interval 19–26 (GHVDHGKT) is G1. Residue 19–26 (GHVDHGKT) participates in GTP binding. Mg(2+) is bound at residue Thr-26. A G2 region spans residues 60-64 (GITIS). A G3 region spans residues 81 to 84 (DCPG). Residues 81–85 (DCPGH) and 136–139 (NKVD) each bind GTP. Residues 136-139 (NKVD) are G4. Positions 174-176 (SAL) are G5.

Belongs to the TRAFAC class translation factor GTPase superfamily. Classic translation factor GTPase family. EF-Tu/EF-1A subfamily. Monomer.

It is found in the cytoplasm. It catalyses the reaction GTP + H2O = GDP + phosphate + H(+). Functionally, GTP hydrolase that promotes the GTP-dependent binding of aminoacyl-tRNA to the A-site of ribosomes during protein biosynthesis. The sequence is that of Elongation factor Tu from Novosphingobium aromaticivorans (strain ATCC 700278 / DSM 12444 / CCUG 56034 / CIP 105152 / NBRC 16084 / F199).